We begin with the raw amino-acid sequence, 36 residues long: MQPSTATAAPKEKTSSEKKDNYIIKGVFWDPACVIA.

The propeptide occupies 1-21 (MQPSTATAAPKEKTSSEKKDN). Cysteine 33 carries the post-translational modification Cysteine methyl ester. Residue cysteine 33 is the site of S-farnesyl cysteine attachment. Residues 34-36 (VIA) constitute a propeptide, removed in mature form.

It is found in the cell membrane. The active factor is excreted into the culture medium by haploid cells of the A mating type and acts on cells of the opposite mating type (type alpha). It mediates the conjugation process between the two types by inhibiting the initiation of DNA synthesis in type alpha cells and synchronizing them with type A. The chain is Mating hormone A-factor 1 (MFA1) from Saccharomyces cerevisiae (strain ATCC 204508 / S288c) (Baker's yeast).